The primary structure comprises 269 residues: Flagellar brake protein YcgR (269 aa).

In terms of domain architecture, PilZ spans 134–254; the sequence is QRRNFYRVTT…SRLLIQRYIT (121 aa).

Belongs to the YcgR family. In terms of assembly, monomer. Interacts with the flagellar basal bodies.

The protein localises to the bacterial flagellum basal body. Functionally, acts as a flagellar brake, regulating swimming and swarming in a bis-(3'-5') cyclic diguanylic acid (c-di-GMP)-dependent manner. Binds 1 c-di-GMP dimer per subunit. Increasing levels of c-di-GMP lead to decreased motility. The chain is Flagellar brake protein YcgR from Nitrosomonas eutropha (strain DSM 101675 / C91 / Nm57).